A 75-amino-acid chain; its full sequence is DNA-directed RNA polymerase subunit omega (75 aa).

Belongs to the RNA polymerase subunit omega family. As to quaternary structure, the RNAP catalytic core consists of 2 alpha, 1 beta, 1 beta' and 1 omega subunit. When a sigma factor is associated with the core the holoenzyme is formed, which can initiate transcription.

It carries out the reaction RNA(n) + a ribonucleoside 5'-triphosphate = RNA(n+1) + diphosphate. Promotes RNA polymerase assembly. Latches the N- and C-terminal regions of the beta' subunit thereby facilitating its interaction with the beta and alpha subunits. The protein is DNA-directed RNA polymerase subunit omega of Nitratidesulfovibrio vulgaris (strain DSM 19637 / Miyazaki F) (Desulfovibrio vulgaris).